The primary structure comprises 118 residues: Small ribosomal subunit protein uS13 (118 aa).

The tract at residues Ser94–Lys118 is disordered.

It belongs to the universal ribosomal protein uS13 family. In terms of assembly, part of the 30S ribosomal subunit. Forms a loose heterodimer with protein S19. Forms two bridges to the 50S subunit in the 70S ribosome.

Located at the top of the head of the 30S subunit, it contacts several helices of the 16S rRNA. In the 70S ribosome it contacts the 23S rRNA (bridge B1a) and protein L5 of the 50S subunit (bridge B1b), connecting the 2 subunits; these bridges are implicated in subunit movement. Contacts the tRNAs in the A and P-sites. The protein is Small ribosomal subunit protein uS13 of Shewanella frigidimarina (strain NCIMB 400).